The following is a 346-amino-acid chain: Phosphoribosylformylglycinamidine cyclo-ligase (346 aa).

The protein belongs to the AIR synthase family.

Its subcellular location is the cytoplasm. The catalysed reaction is 2-formamido-N(1)-(5-O-phospho-beta-D-ribosyl)acetamidine + ATP = 5-amino-1-(5-phospho-beta-D-ribosyl)imidazole + ADP + phosphate + H(+). It participates in purine metabolism; IMP biosynthesis via de novo pathway; 5-amino-1-(5-phospho-D-ribosyl)imidazole from N(2)-formyl-N(1)-(5-phospho-D-ribosyl)glycinamide: step 2/2. This chain is Phosphoribosylformylglycinamidine cyclo-ligase, found in Bacillus licheniformis (strain ATCC 14580 / DSM 13 / JCM 2505 / CCUG 7422 / NBRC 12200 / NCIMB 9375 / NCTC 10341 / NRRL NRS-1264 / Gibson 46).